A 375-amino-acid chain; its full sequence is Protein MGF 360-5L (375 aa).

Belongs to the asfivirus MGF 360 family.

Its function is as follows. Plays a role in virus cell tropism, and may be required for efficient virus replication in macrophages. This African swine fever virus (isolate Portugal/Lis 57/1957) (ASFV) protein is Protein MGF 360-5L.